The following is a 158-amino-acid chain: NAD(P)H-quinone oxidoreductase subunit J, chloroplastic (158 aa).

This sequence belongs to the complex I 30 kDa subunit family. As to quaternary structure, NDH is composed of at least 16 different subunits, 5 of which are encoded in the nucleus.

The protein resides in the plastid. Its subcellular location is the chloroplast thylakoid membrane. It carries out the reaction a plastoquinone + NADH + (n+1) H(+)(in) = a plastoquinol + NAD(+) + n H(+)(out). It catalyses the reaction a plastoquinone + NADPH + (n+1) H(+)(in) = a plastoquinol + NADP(+) + n H(+)(out). In terms of biological role, NDH shuttles electrons from NAD(P)H:plastoquinone, via FMN and iron-sulfur (Fe-S) centers, to quinones in the photosynthetic chain and possibly in a chloroplast respiratory chain. The immediate electron acceptor for the enzyme in this species is believed to be plastoquinone. Couples the redox reaction to proton translocation, and thus conserves the redox energy in a proton gradient. In Daucus carota (Wild carrot), this protein is NAD(P)H-quinone oxidoreductase subunit J, chloroplastic.